A 917-amino-acid chain; its full sequence is Nitrate reductase [NADH] 2 (917 aa).

Residues 1 to 72 (MAASVDNRQY…SEDENETHNS (72 aa)) form a disordered region. Residues 37–47 (AHQNQTTNQTV) show a composition bias toward polar residues. The segment covering 57–67 (DDEDVSSEDEN) has biased composition (acidic residues). Cys191 provides a ligand contact to Mo-molybdopterin. Residues 542-617 (AKMYSMSEVK…LEDYRIGELI (76 aa)) enclose the Cytochrome b5 heme-binding domain. Heme-binding residues include His577 and His600. The FAD-binding FR-type domain maps to 660-772 (RAKVPVQLVE…KGPLGHVEYL (113 aa)). FAD is bound by residues 712–715 (RAYT), 729–733 (VVKIY), Phe734, Phe741, 746–748 (LMS), and Thr799.

This sequence belongs to the nitrate reductase family. Homodimer. It depends on FAD as a cofactor. The cofactor is heme. Requires Mo-molybdopterin as cofactor. Root, leaf, and shoot.

The catalysed reaction is nitrite + NAD(+) + H2O = nitrate + NADH + H(+). Its function is as follows. Nitrate reductase is a key enzyme involved in the first step of nitrate assimilation in plants, fungi and bacteria. This Arabidopsis thaliana (Mouse-ear cress) protein is Nitrate reductase [NADH] 2 (NIA2).